The primary structure comprises 156 residues: ATP synthase subunit b (156 aa).

A helical membrane pass occupies residues 5–25 (LTLIGQAIAFAIFVAFCMKFV).

It belongs to the ATPase B chain family. In terms of assembly, F-type ATPases have 2 components, F(1) - the catalytic core - and F(0) - the membrane proton channel. F(1) has five subunits: alpha(3), beta(3), gamma(1), delta(1), epsilon(1). F(0) has three main subunits: a(1), b(2) and c(10-14). The alpha and beta chains form an alternating ring which encloses part of the gamma chain. F(1) is attached to F(0) by a central stalk formed by the gamma and epsilon chains, while a peripheral stalk is formed by the delta and b chains.

Its subcellular location is the cell inner membrane. In terms of biological role, f(1)F(0) ATP synthase produces ATP from ADP in the presence of a proton or sodium gradient. F-type ATPases consist of two structural domains, F(1) containing the extramembraneous catalytic core and F(0) containing the membrane proton channel, linked together by a central stalk and a peripheral stalk. During catalysis, ATP synthesis in the catalytic domain of F(1) is coupled via a rotary mechanism of the central stalk subunits to proton translocation. Functionally, component of the F(0) channel, it forms part of the peripheral stalk, linking F(1) to F(0). The protein is ATP synthase subunit b of Acinetobacter baylyi (strain ATCC 33305 / BD413 / ADP1).